Consider the following 997-residue polypeptide: MASEGTSWGAEDIGAQGDQVQHSEEQVDNYAHDSLASGDADAADNGTEDDGGEYDPESVTIGTPAMVPEPASSGTQRQTSKPKMSGGFIVEASDDEDEDEDEDEDEDEDEQPASAVPQTDAVSTQNHPGPSTTSDEHVPAAPTHAPVPPAVPSNVTPVLPGFGPVDLLEFRVKEDPRGDMDAWQELIASHRDFSPLEKARSTYNRFVEIFPQAADKWVEWIELELKYNNFVEVEQLFGRCLMQVPNVKLWTVYLDYIRRRNDLNNDPSGQARRTVTQSYEFVIDNIGVDRDSGNIWQQYVQFVKNGPGQIDGTDWQDRQKMDQLRGIYRRAVAVPMSTVNNLWKEYDQFEMGLNKMTGRKFIQERSPVYMSAKSANIALDNITRHLDRTNLPRLPPAPGFNGDQEFRDQVEMWKKWIAWEKEDPLVLKSDEPKAYNQRVLHVYKQALMALRFWPEIWVDAAEWCFQNDIRENDKEMGTELLVEGIKANRESVLLALKHADHIEVNYPDKEVDKAEFAQAVRKPYDDVLETLYEMGDKVKEREKLEISTLKQAAAQDPVQTSIEENDDDEDNTPKRSPTEERILAIQKGYAAETQLLSRTISYVWIALARAMRRIQGKGSQAEGGLRKVFTDARQKGRLTSDVYVAVALLESVVYKDPVGAKIFERGARLFPNDEMFMIEYLKYLHSKDDTTNARVVFETCINRLVSNPDTLAKAKLLYAYFHKYESQYGELSQISKLEDRMAELFPEDPKLKSFVDRFSTEKFDPIATPIIISKTAQMRPKQIVPVVQHQHQQSISLRNSPMPVRQEQNPRPQYVRATASPKRPLAVDDEELNPPKRLARGASPLKGAAGRRLDQQRRNQASALHRDITFLLNILPSSQSYDAQRFNSAALVSILRDTEIPDFATLKAAGGGQPRFGNPTHTRQPSGEFVNRPLSPYGRMSAAAGGYRNSPLRPETGNAYQSNPYPPPEASGQQPTWPQAPGGYGAPAPGQFGGYRY.

A disordered region spans residues Met-1–Pro-152. Low complexity predominate over residues His-32–Asp-44. Over residues Gly-46 to Pro-56 the composition is skewed to acidic residues. The segment covering Ser-72–Pro-82 has biased composition (polar residues). The span at Ala-92–Gln-111 shows a compositional bias: acidic residues. The span at Val-116 to Thr-133 shows a compositional bias: polar residues. 6 HAT repeats span residues Ser-194 to Lys-226, Asn-228 to Arg-259, Gln-270 to Asn-305, Gln-319 to Gly-352, Thr-389 to Glu-422, and Ala-434 to Gln-466. The tract at residues Leu-549–Glu-579 is disordered. One copy of the HAT 7 repeat lies at Tyr-654–Ser-686. 2 disordered regions span residues Gln-792–Asp-854 and Lys-907–Tyr-997.

The protein localises to the nucleus. It localises to the cytoplasm. Component of the cleavage factor IA (CFIA) complex, which is involved in the endonucleolytic cleavage during polyadenylation-dependent pre-mRNA 3'-end formation. This is mRNA 3'-end-processing protein RNA14 (RNA14) from Gibberella zeae (strain ATCC MYA-4620 / CBS 123657 / FGSC 9075 / NRRL 31084 / PH-1) (Wheat head blight fungus).